Consider the following 103-residue polypeptide: Large ribosomal subunit protein eL30 (103 aa).

It belongs to the eukaryotic ribosomal protein eL30 family.

This Methanothrix thermoacetophila (strain DSM 6194 / JCM 14653 / NBRC 101360 / PT) (Methanosaeta thermophila) protein is Large ribosomal subunit protein eL30.